An 81-amino-acid polypeptide reads, in one-letter code: Sulfur carrier protein TusA (81 aa).

Catalysis depends on C19, which acts as the Cysteine persulfide intermediate.

Belongs to the sulfur carrier protein TusA family. As to quaternary structure, interacts with IscS.

It localises to the cytoplasm. It participates in tRNA modification. Functionally, sulfur carrier protein involved in sulfur trafficking in the cell. Part of a sulfur-relay system required for 2-thiolation during synthesis of 2-thiouridine of the modified wobble base 5-methylaminomethyl-2-thiouridine (mnm(5)s(2)U) in tRNA. Interacts with IscS and stimulates its cysteine desulfurase activity. Accepts an activated sulfur from IscS, which is then transferred to TusD, and thus determines the direction of sulfur flow from IscS to 2-thiouridine formation. Also appears to be involved in sulfur transfer for the biosynthesis of molybdopterin. This Shigella boydii serotype 18 (strain CDC 3083-94 / BS512) protein is Sulfur carrier protein TusA.